The following is a 192-amino-acid chain: Visinin (192 aa).

Glycine 2 carries N-myristoyl glycine lipidation. 4 consecutive EF-hand domains span residues 24–59 (TEEE…FFPN), 61–96 (EPQG…TSSG), 97–132 (KTHL…IFKM), and 146–181 (NSPQ…KNDA). Ca(2+)-binding residues include aspartate 74, asparagine 76, aspartate 78, threonine 80, glutamate 85, aspartate 110, aspartate 112, asparagine 114, glutamate 116, glutamate 121, asparagine 164, lysine 166, and glutamate 171.

It belongs to the recoverin family. Retinal cell specific protein.

Seems to be implicated in the pathway from retinal rod guanylate cyclase to rhodopsin. May be involved in the blocking of the phosphorylation of rhodopsin. In Gallus gallus (Chicken), this protein is Visinin.